The sequence spans 355 residues: Protein ATP1B4 (355 aa).

Topologically, residues 1–108 are nuclear; it reads MRRQLRSRRA…SLARTGQSLS (108 aa). The tract at residues 35–76 is disordered; it reads EEEEAEEARVMVVPDLEEEEKEEEEEKEEDEKEEEESHHQDT. Residues 49–68 show a composition bias toward acidic residues; it reads DLEEEEKEEEEEKEEDEKEE. A helical; Signal-anchor for type II membrane protein transmembrane segment spans residues 109-129; sequence LLLVIYFFFYASLAAVITLCM. Topologically, residues 130-355 are perinuclear space; sequence YTLFLTISPY…RVIFTLNIET (226 aa).

Belongs to the X(+)/potassium ATPases subunit beta family. Associates with a SMAD7-transcriptional complex. Interacts with SNW1 and TOR1AIP1. Does not associate with known Na,K-ATPase alpha-subunits. Expressed in skeletal muscle (at protein level). Expressed during postnatal development in skeletal muscle and heart.

The protein resides in the nucleus inner membrane. Functionally, may act as a transcriptional coregulator during muscle development through its interaction with SNW1. Has lost its ancestral function as a Na,K-ATPase beta-subunit. This chain is Protein ATP1B4 (ATP1B4), found in Sus scrofa (Pig).